Reading from the N-terminus, the 378-residue chain is Putative glutamate--cysteine ligase 2 (378 aa).

Belongs to the glutamate--cysteine ligase type 2 family. YbdK subfamily.

It catalyses the reaction L-cysteine + L-glutamate + ATP = gamma-L-glutamyl-L-cysteine + ADP + phosphate + H(+). In terms of biological role, ATP-dependent carboxylate-amine ligase which exhibits weak glutamate--cysteine ligase activity. This is Putative glutamate--cysteine ligase 2 from Leifsonia xyli subsp. xyli (strain CTCB07).